A 394-amino-acid polypeptide reads, in one-letter code: Flap endonuclease 1 (394 aa).

The segment at 1-104 (MGIKQLFSII…GELAKRFQRK (104 aa)) is N-domain. D34 is a Mg(2+) binding site. DNA is bound by residues R47 and R70. Mg(2+) is bound by residues D86, E158, E160, D179, and D181. An I-domain region spans residues 122 to 253 (DVEKFSRRTV…STALKLIREH (132 aa)). E158 is a binding site for DNA. Positions 231 and 233 each coordinate DNA. D233 contacts Mg(2+). Residues 341–349 (QQARIEGFF) form an interaction with PCNA region. The segment covering 356–383 (EEEKKAHKRKLEEQAEQKRKKVKEEKKE) has biased composition (basic and acidic residues). Residues 356–394 (EEEKKAHKRKLEEQAEQKRKKVKEEKKEKAKLKAKPRGA) are disordered. The segment covering 384-394 (KAKLKAKPRGA) has biased composition (basic residues).

Belongs to the XPG/RAD2 endonuclease family. FEN1 subfamily. Interacts with PCNA. Three molecules of FEN1 bind to one PCNA trimer with each molecule binding to one PCNA monomer. PCNA stimulates the nuclease activity without altering cleavage specificity. It depends on Mg(2+) as a cofactor. Post-translationally, phosphorylated. Phosphorylation upon DNA damage induces relocalization to the nuclear plasma.

The protein localises to the nucleus. Its subcellular location is the nucleolus. The protein resides in the nucleoplasm. It localises to the mitochondrion. Its function is as follows. Structure-specific nuclease with 5'-flap endonuclease and 5'-3' exonuclease activities involved in DNA replication and repair. During DNA replication, cleaves the 5'-overhanging flap structure that is generated by displacement synthesis when DNA polymerase encounters the 5'-end of a downstream Okazaki fragment. It enters the flap from the 5'-end and then tracks to cleave the flap base, leaving a nick for ligation. Also involved in the long patch base excision repair (LP-BER) pathway, by cleaving within the apurinic/apyrimidinic (AP) site-terminated flap. Acts as a genome stabilization factor that prevents flaps from equilibrating into structures that lead to duplications and deletions. Also possesses 5'-3' exonuclease activity on nicked or gapped double-stranded DNA, and exhibits RNase H activity. Also involved in replication and repair of rDNA and in repairing mitochondrial DNA. The chain is Flap endonuclease 1 from Sordaria macrospora (strain ATCC MYA-333 / DSM 997 / K(L3346) / K-hell).